The sequence spans 750 residues: Coiled-coil domain-containing protein 142 (750 aa).

Residues 1–29 are disordered; the sequence is MAQASRSGSLPPLVIVPPLRAQPGGTGEE. Residues 87–110 are a coiled coil; sequence ALQRLRAVLLRLHREREQLLQARD. Residues 687-714 form a disordered region; sequence LEPPLQPGTSPAQTGQLQSTLGGRGPSP. Polar residues predominate over residues 693–707; sequence PGTSPAQTGQLQSTL.

This is Coiled-coil domain-containing protein 142 (CCDC142) from Homo sapiens (Human).